The chain runs to 62 residues: Chromatin protein Cren7 2 (62 aa).

This sequence belongs to the Cren7 family. As to quaternary structure, monomer. In terms of processing, methylated at multiple sites, to varying extents.

The protein localises to the chromosome. It is found in the cytoplasm. Its function is as follows. A chromatin protein, binds double-stranded DNA without sequence specificity. Constrains negative DNA supercoils. This chain is Chromatin protein Cren7 2 (cren7-2), found in Hyperthermus butylicus (strain DSM 5456 / JCM 9403 / PLM1-5).